Consider the following 752-residue polypeptide: Microtubule-associated protein tau (752 aa).

The interval 1–567 (MAEPRQEFDT…PVPMPDLKNV (567 aa)) is disordered. Ala-2 bears the N-acetylalanine mark. Position 18 is a phosphotyrosine (Tyr-18). Lys-33 is covalently cross-linked (Glycyl lysine isopeptide (Lys-Gly) (interchain with G-Cter in ubiquitin)). Residues Ser-35 and Ser-50 each carry the phosphoserine modification. Polar residues predominate over residues 50-60 (SETSDAKSTPT). Phosphothreonine is present on residues Thr-58, Thr-60, and Thr-100. Residues 142–151 (SDWTHQQVPS) show a composition bias toward polar residues. Residues 173–182 (RPEDVERSHP) show a composition bias toward basic and acidic residues. Phosphoserine is present on residues Ser-191 and Ser-204. Over residues 192–204 (PQKEAWGKDRLGS) the composition is skewed to basic and acidic residues. A compositionally biased stretch (acidic residues) spans 205 to 218 (EEEVDEDITMDESS). Over residues 219–229 (QESPPSQASLA) the composition is skewed to low complexity. Residues 233-252 (ATPQARSVSASGVSGETTSI) show a composition bias toward polar residues. Basic and acidic residues-rich tracts occupy residues 289–313 (EEGH…KEQD) and 374–385 (SKDRTGNDEKKA). Polar residues-rich tracts occupy residues 387–400 (TSTP…SNRP) and 432–446 (KYVS…SPGT). Thr-464 is subject to Phosphothreonine. Omega-N-methylarginine is present on Arg-466. An N6,N6-dimethyllysine; alternate modification is found at Lys-474. Residue Lys-474 is modified to N6-acetyllysine; alternate. Residues Thr-480, Thr-486, and Thr-487 each carry the phosphothreonine modification. At Ser-489 the chain carries Phosphoserine. Thr-492 is subject to Phosphothreonine. 3 positions are modified to phosphoserine: Ser-496, Ser-502, and Ser-506. The span at 498–525 (EPPKSGERSGYSSPGSPGTPGSRSRTPS) shows a compositional bias: low complexity. Tyr-508 is subject to Phosphotyrosine. Ser-509 and Ser-510 each carry phosphoserine. Ser-513 bears the Phosphoserine; by CK1, PDPK1 and TTBK1 mark. Residues Thr-516 and Thr-523 each carry the phosphothreonine modification. Residue Ser-525 is modified to Phosphoserine. Thr-528 carries the post-translational modification Phosphothreonine. Lys-536 carries the N6-acetyllysine modification. Phosphothreonine is present on Thr-542. Phosphoserine occurs at positions 546 and 548. Tau/MAP repeat units follow at residues 555-585 (QTAP…GGGK), 586-616 (VQII…GGGS), 617-647 (VHIV…GGGQ), and 648-679 (VEVK…GGGN). A Glycyl lysine isopeptide (Lys-Gly) (interchain with G-Cter in ubiquitin) cross-link involves residue Lys-565. Lys-570 carries the N6-acetyllysine; alternate modification. Lys-570 bears the N6-methyllysine; alternate mark. Lys-570 is covalently cross-linked (Glycyl lysine isopeptide (Lys-Gly) (interchain with G-Cter in ubiquitin); alternate). Phosphoserine is present on Ser-573. Lys-578 participates in a covalent cross-link: Glycyl lysine isopeptide (Lys-Gly) (interchain with G-Cter in ubiquitin). Residue Lys-592 is modified to N6-acetyllysine; alternate. A Glycyl lysine isopeptide (Lys-Gly) (interchain with G-Cter in ubiquitin); alternate cross-link involves residue Lys-592. Ser-596 and Ser-600 each carry phosphoserine. N6-acetyllysine is present on Lys-601. A disulfide bond links Cys-602 and Cys-633. Phosphoserine is present on Ser-604. Lys-609 carries the N6-acetyllysine; alternate modification. Residue Lys-609 forms a Glycyl lysine isopeptide (Lys-Gly) (interchain with G-Cter in ubiquitin); alternate linkage. Ser-616 is subject to Phosphoserine. An N6,N6-dimethyllysine; alternate modification is found at Lys-622. An N6-acetyllysine; alternate mark is found at Lys-622, Lys-628, and Lys-632. Glycyl lysine isopeptide (Lys-Gly) (interchain with G-Cter in ubiquitin); alternate cross-links involve residues Lys-622, Lys-628, and Lys-632. A Phosphoserine modification is found at Ser-635. N6-acetyllysine; alternate occurs at positions 642, 654, and 658. Residues Lys-642, Lys-654, and Lys-658 each participate in a glycyl lysine isopeptide (Lys-Gly) (interchain with G-Cter in ubiquitin); alternate cross-link. Residue Arg-660 is modified to Omega-N-methylarginine. Ser-663 carries the post-translational modification Phosphoserine. Lys-664 participates in a covalent cross-link: Glycyl lysine isopeptide (Lys-Gly) (interchain with G-Cter in ubiquitin). Ser-667 carries the post-translational modification Phosphoserine. Residue Lys-680 is modified to N6-acetyllysine; alternate. Lys-680 participates in a covalent cross-link: Glycyl lysine isopeptide (Lys-Gly) (interchain with G-Cter in ubiquitin); alternate. Residue Lys-686 forms a Glycyl lysine isopeptide (Lys-Gly) (interchain with G-Cter in ubiquitin) linkage. Lys-696 bears the N6-acetyllysine; alternate mark. Residue Lys-696 forms a Glycyl lysine isopeptide (Lys-Gly) (interchain with G-Cter in ubiquitin); alternate linkage. Position 705 is a phosphotyrosine (Tyr-705). Ser-707 is modified (phosphoserine; by CK1 and PDPK1). Residue Ser-711 is modified to Phosphoserine. Position 714 is a phosphothreonine (Thr-714). Ser-715 carries the phosphoserine; by CK1 and PDPK1 modification. Phosphoserine occurs at positions 720, 727, and 733. Residue Thr-738 is modified to Phosphothreonine.

Interacts with MARK1, MARK2, MARK3 and MARK4. Interacts with SQSTM1 when polyubiquitinated. Interacts with PSMC2 through SQSTM1. Interacts with FKBP4. Binds to CSNK1D. Interacts with SGK1. Interacts with EPM2A; the interaction dephosphorylates MAPT at Ser-388. Interacts with PIN1. Interacts with LRRK2. Interacts with LRP1, leading to endocytosis; this interaction is reduced in the presence of LRPAP1/RAP. In terms of processing, polyubiquitinated. Requires functional TRAF6 and may provoke SQSTM1-dependent degradation by the proteasome. Post-translationally, phosphorylated at various serine and threonine residues in S-P or T-P motifs by proline-directed protein kinases (PDPK1, CDK1, CDK5, GSK3, MAPK) (a few sites per protein in interphase, more in mitosis), and at serine residues in K-X-G-S motifs by MAP/microtubule affinity-regulating kinase (MARK1, MARK2, MARK3, MARK4), causing detachment from microtubules, and their disassembly. Fetal Tau is much more phosphorylated than adult Tau. Phosphorylation at Ser-573 by BRSK1 and BRSK2 in neurons affects ability to bind microtubules and plays a role in neuron polarization. Phosphorylated by PHK. Dephosphorylation at several serine and threonine residues by the serine/threonine phosphatase PPP5C. Phosphorylation at Ser-204 by SGK1 mediates microtubule depolymerization and neurite formation in hippocampal neurons. As to expression, expressed in neurons. The larger forms (isoform tau-A and isoform tau-B) are preferentially expressed in the peripheral nervous system while the other are expressed in the central nervous system. Low amounts of the larger forms are also found in limited areas of the CNS.

It localises to the cytoplasm. Its subcellular location is the cytosol. The protein resides in the cell membrane. The protein localises to the cytoskeleton. It is found in the cell projection. It localises to the axon. Its subcellular location is the dendrite. The protein resides in the secreted. Promotes microtubule assembly and stability, and might be involved in the establishment and maintenance of neuronal polarity. The C-terminus binds axonal microtubules while the N-terminus binds neural plasma membrane components, suggesting that tau functions as a linker protein between both. Axonal polarity is predetermined by tau localization (in the neuronal cell) in the domain of the cell body defined by the centrosome. The short isoforms allow plasticity of the cytoskeleton whereas the longer isoforms may preferentially play a role in its stabilization. This chain is Microtubule-associated protein tau, found in Rattus norvegicus (Rat).